The sequence spans 341 residues: Cytoplasmic tRNA 2-thiolation protein 1 (341 aa).

This sequence belongs to the TtcA family. CTU1/NCS6/ATPBD3 subfamily.

Its subcellular location is the cytoplasm. It participates in tRNA modification; 5-methoxycarbonylmethyl-2-thiouridine-tRNA biosynthesis. In terms of biological role, plays a central role in 2-thiolation of mcm(5)S(2)U at tRNA wobble positions of tRNA(Lys), tRNA(Glu) and tRNA(Gln). Directly binds tRNAs and probably acts by catalyzing adenylation of tRNAs, an intermediate required for 2-thiolation. It is unclear whether it acts as a sulfurtransferase that transfers sulfur from thiocarboxylated URM1 onto the uridine of tRNAs at wobble position. The protein is Cytoplasmic tRNA 2-thiolation protein 1 of Aedes aegypti (Yellowfever mosquito).